Consider the following 524-residue polypeptide: Leukotriene-B4 omega-hydroxylase 3 (524 aa).

Glutamate 328 and cysteine 468 together coordinate heme.

This sequence belongs to the cytochrome P450 family. Requires heme as cofactor.

The protein localises to the endoplasmic reticulum membrane. It is found in the microsome membrane. The catalysed reaction is leukotriene B4 + reduced [NADPH--hemoprotein reductase] + O2 = 20-hydroxy-leukotriene B4 + oxidized [NADPH--hemoprotein reductase] + H2O + H(+). Its pathway is lipid metabolism; leukotriene B4 degradation. Functionally, cytochromes P450 are a group of heme-thiolate monooxygenases. Catalyzes the omega-hydroxylation of LTB4. The sequence is that of Leukotriene-B4 omega-hydroxylase 3 (Cyp4f14) from Mus musculus (Mouse).